We begin with the raw amino-acid sequence, 70 residues long: DNA-directed RNA polymerase subunit epsilon (70 aa).

This sequence belongs to the RNA polymerase subunit epsilon family. In terms of assembly, RNAP is composed of a core of 2 alpha, a beta and a beta' subunit. The core is associated with a delta subunit, and at least one of epsilon or omega. When a sigma factor is associated with the core the holoenzyme is formed, which can initiate transcription.

The enzyme catalyses RNA(n) + a ribonucleoside 5'-triphosphate = RNA(n+1) + diphosphate. In terms of biological role, a non-essential component of RNA polymerase (RNAP). The sequence is that of DNA-directed RNA polymerase subunit epsilon from Limosilactobacillus reuteri (strain DSM 20016) (Lactobacillus reuteri).